The following is a 549-amino-acid chain: Glucose-6-phosphate isomerase (549 aa).

Lysine 80, lysine 228, and lysine 234 each carry N6-acetyllysine. The active-site Proton donor is glutamate 355. Active-site residues include histidine 386 and lysine 514.

The protein belongs to the GPI family.

The protein localises to the cytoplasm. It carries out the reaction alpha-D-glucose 6-phosphate = beta-D-fructose 6-phosphate. Its pathway is carbohydrate biosynthesis; gluconeogenesis. The protein operates within carbohydrate degradation; glycolysis; D-glyceraldehyde 3-phosphate and glycerone phosphate from D-glucose: step 2/4. In terms of biological role, catalyzes the reversible isomerization of glucose-6-phosphate to fructose-6-phosphate. The sequence is that of Glucose-6-phosphate isomerase from Shigella boydii serotype 4 (strain Sb227).